The chain runs to 163 residues: MDALEEESFALSFSSASDAEFDAVVGCLEDIIMDDEFQLLQRNFMDKYYQEFEDTEENKLTYTPIFNEYISLVEKYIEEQLLERIPGFNMAAFTTTLQHHKDEVAGDIFDMLLTFTDFLAFKEMFLDYRAEKEGRGLDLSSGLVVTSLCKSSSTPASQNNLRH.

Belongs to the ARL2BP family. In terms of assembly, interacts with GTP bound ARL2 and ARL3; the complex ARL2-ARL2BP as well as ARL2BP alone, binds to SLC25A4/ANT1. Interaction with ARL2 may be required for targeting to cilia basal body. Interacts with STAT3; interaction is enhanced with ARL2. Found in a complex with ARL2BP, ARL2 and SLC25A6. Found in a complex with ARL2, ARL2BP and SLC25A4. Interacts with STAT2, STAT3 and STAT4. In terms of tissue distribution, widely expressed, with most abundant activity in brain, especially in hippocampus and cortex. Also expressed in lung, cerebellum, liver, kidney, retina, spleen, muscle and heart (at protein level).

The protein localises to the cytoplasm. It is found in the mitochondrion intermembrane space. Its subcellular location is the cytoskeleton. The protein resides in the microtubule organizing center. It localises to the centrosome. The protein localises to the nucleus. It is found in the cilium basal body. Its function is as follows. Together with ARL2, plays a role in the nuclear translocation, retention and transcriptional activity of STAT3. May play a role as an effector of ARL2. The polypeptide is ADP-ribosylation factor-like protein 2-binding protein (Arl2bp) (Mus musculus (Mouse)).